The sequence spans 833 residues: MSFYNHKEIEPKWQEFWAKNHTFKTGTDAEKPNFYALDMFPYPSGAGLHVGHPEGYTATDILSRYKRAQGYNVLHPMGWDAFGLPAEQYAMDTGNDPADFTAENIANFKRQINALGFSYDWDREVNTTDPNYYKWTQWIFTKLYEKGLAYEAEVPVNWVEELGTAIANEEVLPDGTSERGGYPVVRKPMRQWMLKITAYAERLLNDLEEVDWPESIKDMQRNWIGKSTGANVTFKIKDTDKDFTVFTTRPDTLFGATYAVLAPEHDLVDSITSAEQAEAVAEYKRQASLKSDLARTDLAKDKTGVWTGAYAINPVNGKEIPIWIADYVLASYGTGAIMAVPAHDERDWEFAKQFGLDIIPVLEGGNVEEAPYTEDGAHINSDFLDGLNKEEAIAKMVAWLEENGVGQEKISYRLRDWLFSRQRYWGEPIPIIHWEDGTSTAVPENELPLVLPKTSDIKPSGTGESPLANLTDWLEVVREDGVKGRRETNTMPQWAGSSWYYLRYIDPHNDEKLADEDLLKAWLPVDIYIGGAEHAVLHLLYARFWHKFLYDLGVVPTKEPFQKLFNQGMILGTSYRDSRGALVATDKVEKRDGSFFHMETGEELEQAPAKMSKSLKNVVNPDDVVEQFGADTLRVYEMFMGPLDASIAWSEEGLEGSRKFLDRVYRLLTTKELVAENSGALDKVYNETVKTVTEHIEDLKFNTAIAQLMIFVNAANKEDKLYVDYAKGFVQLIAPFAPHLAEELWQGLANTGQSISYVAWPTYDESKLVESEVEIVVQIKGKVKARLTVAKDLAPAELEKVALADEKVQAEIAGQTVVKVISVPNKLVNIVVK.

The 'HIGH' region signature appears at 41–52 (PYPSGAGLHVGH). The 'KMSKS' region signature appears at 610–614 (KMSKS). An ATP-binding site is contributed by Lys-613.

This sequence belongs to the class-I aminoacyl-tRNA synthetase family.

The protein resides in the cytoplasm. It carries out the reaction tRNA(Leu) + L-leucine + ATP = L-leucyl-tRNA(Leu) + AMP + diphosphate. This Streptococcus suis (strain 98HAH33) protein is Leucine--tRNA ligase.